A 686-amino-acid chain; its full sequence is Methionine--tRNA ligase (686 aa).

The 'HIGH' region signature appears at 22 to 32 (PYANGPIHLGH). Residues Cys-153, Cys-156, Cys-166, and Cys-169 each contribute to the Zn(2+) site. The 'KMSKS' region motif lies at 337-341 (KMSKS). Lys-340 contributes to the ATP binding site. A disordered region spans residues 547–573 (MLEDSKESTPAPAAAKPKKAATQKADA). Residues 584-686 (DFLKVKLRVA…SGAEPGMEVR (103 aa)) enclose the tRNA-binding domain.

Belongs to the class-I aminoacyl-tRNA synthetase family. MetG type 1 subfamily. In terms of assembly, homodimer. It depends on Zn(2+) as a cofactor.

Its subcellular location is the cytoplasm. The enzyme catalyses tRNA(Met) + L-methionine + ATP = L-methionyl-tRNA(Met) + AMP + diphosphate. Functionally, is required not only for elongation of protein synthesis but also for the initiation of all mRNA translation through initiator tRNA(fMet) aminoacylation. In Alcanivorax borkumensis (strain ATCC 700651 / DSM 11573 / NCIMB 13689 / SK2), this protein is Methionine--tRNA ligase.